Here is a 798-residue protein sequence, read N- to C-terminus: Integrin beta-1-B (798 aa).

An N-terminal signal peptide occupies residues 1–21 (MARYPVFTFVFLICLVLCTNA). Topologically, residues 22–727 (QQGGTECLKA…VKEPECPSGP (706 aa)) are extracellular. A PSI domain is found at 27 to 77 (ECLKANAKSCGECIQAGPNCGWCTKVDFLQEGEPTSARCDDLAALKTKGCP). 28 disulfide bridges follow: Cys-28–Cys-46, Cys-36–Cys-464, Cys-39–Cys-65, Cys-49–Cys-76, Cys-206–Cys-212, Cys-260–Cys-300, Cys-400–Cys-414, Cys-434–Cys-462, Cys-466–Cys-486, Cys-477–Cys-489, Cys-491–Cys-500, Cys-502–Cys-533, Cys-516–Cys-531, Cys-525–Cys-536, Cys-538–Cys-553, Cys-555–Cys-576, Cys-560–Cys-574, Cys-568–Cys-579, Cys-581–Cys-590, Cys-592–Cys-615, Cys-599–Cys-613, Cys-607–Cys-618, Cys-620–Cys-630, Cys-633–Cys-636, Cys-640–Cys-691, Cys-646–Cys-665, Cys-649–Cys-661, and Cys-699–Cys-723. The segment at 77–106 (PEDDIQNPRGRKQKLKDIPITSKGKGERMD) is disordered. N-linked (GlcNAc...) asparagine glycosylation is found at Asn-109 and Asn-131. The VWFA domain occupies 139 to 377 (DYPIDLYYLM…QLIIDSYNSL (239 aa)). Residues Ser-151 and Ser-153 each contribute to the Mg(2+) site. Residues Ser-153, Asp-156, Asp-157, and Glu-188 each coordinate Ca(2+). N-linked (GlcNAc...) asparagine glycosylation is found at Asn-211 and Asn-223. Residues Asn-243, Asp-245, Pro-247, and Glu-248 each coordinate Ca(2+). Glu-248 is a binding site for Mg(2+). Residues Asn-268 and Asn-362 are each glycosylated (N-linked (GlcNAc...) asparagine). N-linked (GlcNAc...) asparagine glycosylation occurs at Asn-416. I-EGF domains follow at residues 466–501 (CQDK…KECE), 502–554 (CSTD…KYCE), 555–591 (CDNF…SACD), and 592–631 (CSED…PTCE). Asn-481 is a glycosylation site (N-linked (GlcNAc...) asparagine). N-linked (GlcNAc...) asparagine glycosylation is present at Asn-520. Asn-584 is a glycosylation site (N-linked (GlcNAc...) asparagine). A glycan (N-linked (GlcNAc...) asparagine) is linked at Asn-669. The helical transmembrane segment at 728-751 (DIIPIVAGVVAGIVLIGLALLLIW) threads the bilayer. The Cytoplasmic segment spans residues 752–798 (KLLMIIHDRREFAKFEKEKMNAKWDTGENPIYKSAVATVVNPKYEGK). The residue at position 783 (Tyr-783) is a Phosphotyrosine.

This sequence belongs to the integrin beta chain family. In terms of assembly, heterodimer of an alpha and a beta subunit.

It localises to the cell membrane. The protein resides in the cell projection. It is found in the invadopodium membrane. The protein localises to the ruffle membrane. Its subcellular location is the melanosome. It localises to the cleavage furrow. The protein resides in the lamellipodium. It is found in the ruffle. Beta integrins associate with alpha subunits to form receptor complexes that recognize the sequence R-G-D in a wide array of ligands. May be involved in osteoblast compaction. May play role in myoblast differentiation and fusion during skeletal myogenesis. The chain is Integrin beta-1-B (itgb1-b) from Xenopus laevis (African clawed frog).